We begin with the raw amino-acid sequence, 341 residues long: Zinc transporter 6, chloroplastic (341 aa).

The helical transmembrane segment at 28–48 (IVAVFAIFLTSVFGVWGPVLL) threads the bilayer. Over 49 to 61 (AKYFHGKPLYDKA) the chain is Cytoplasmic. Residues 62–82 (ILVIKCFAAGVILSTSLVHVL) traverse the membrane as a helical segment. At 83–102 (PEAFESLADCQVSSRHPWKD) the chain is on the lumenal side. The helical transmembrane segment at 103–123 (FPFAGLVTMIGAITALLVDLT) threads the bilayer. Topologically, residues 124 to 179 (ASEHMGHGGGGGGDGGMEYMPVGKAVGGLEMKEGKCGADLEIQENSEEEIVKMKQR) are cytoplasmic. A helical transmembrane segment spans residues 180–200 (LVSQVLEIGIIFHSVIIGVTM). At 201-211 (GMSQNKCTIRP) the chain is on the lumenal side. The helical transmembrane segment at 212 to 232 (LIAALSFHQIFEGLGLGGCIA) threads the bilayer. At 233–243 (QAGFKAGTVVY) the chain is on the cytoplasmic side. A helical membrane pass occupies residues 244 to 264 (MCLMFAVTTPLGIVLGMVIFA). Over 265 to 280 (ATGYDDQNPNALIMEG) the chain is Lumenal. A helical transmembrane segment spans residues 281–301 (LLGSFSSGILIYMALVDLIAL). The Cytoplasmic segment spans residues 302–320 (DFFHNKMLTTCGESGSRLK). Residues 321–341 (KLCFVALVLGSASMSLLALWA) form a helical membrane-spanning segment.

It belongs to the ZIP transporter (TC 2.A.5) family.

Its subcellular location is the plastid. It localises to the chloroplast thylakoid membrane. May play a role in the transport of zinc in the plastids. The polypeptide is Zinc transporter 6, chloroplastic (ZIP6) (Arabidopsis thaliana (Mouse-ear cress)).